The primary structure comprises 356 residues: AT-hook motif nuclear-localized protein 1 (356 aa).

Residues 1–127 form a disordered region; it reads MVLNMESTGE…PSHLPPPSSH (127 aa). Pro residues predominate over residues 49–66; the sequence is VTPPPPQPSSHHTAPPPL. Basic residues predominate over residues 88–97; that stretch reads MKKKRGRPRK. The Bipartite nuclear localization signal motif lies at 89–97; sequence KKKRGRPRK. The segment at residues 89 to 101 is a DNA-binding region (a.T hook); the sequence is KKKRGRPRKYGPD. A compositionally biased stretch (low complexity) spans 106-118; sequence ALSPKPISSAPAP. One can recognise a PPC domain in the interval 167 to 309; it reads GGNFTPHIIT…KHDFMLSSPT (143 aa). The tract at residues 270–287 is required for nuclear localization; it reads GLLVAASPVQVVVGSFLA. A Nuclear localization signal motif is present at residues 295–302; sequence KPKKNKHD.

The protein localises to the nucleus. It is found in the nucleoplasm. Its subcellular location is the chromosome. In terms of biological role, transcription factor that specifically binds AT-rich DNA sequences related to the nuclear matrix attachment regions (MARs). May play a function in the positioning of chromatin fibers within the nucleus. In Arabidopsis thaliana (Mouse-ear cress), this protein is AT-hook motif nuclear-localized protein 1.